The following is a 234-amino-acid chain: MSGQLASYKQEFLKAAIEGGVLKFGSFELKSKRISPYFFNAGEFHTAHLAGAISSAFAKTIIDAQQNAGLDFDIIFGPAYKGIPLCSAITIKLGEISPQNLDTVSYSFDRKEAKDHGEGGNIVGASLKGKKILIVDDVITAGTAKREAIDKIRKEGGIVAGIVVALDRKEKLPAADGDDSKPGPSAIGELRKEYGIPIFAILTLDDIIAGMKSFASDDDIKRTEEYRQKYKATD.

A 5-phospho-alpha-D-ribose 1-diphosphate-binding site is contributed by lysine 30. 38–39 provides a ligand contact to orotate; it reads FF. 5-phospho-alpha-D-ribose 1-diphosphate-binding positions include 80 to 81, arginine 110, lysine 111, lysine 114, histidine 116, and 136 to 144; these read YK and DDVITAGTA. The orotate site is built by threonine 140 and arginine 168.

Belongs to the purine/pyrimidine phosphoribosyltransferase family. PyrE subfamily. Homodimer.

The catalysed reaction is orotidine 5'-phosphate + diphosphate = orotate + 5-phospho-alpha-D-ribose 1-diphosphate. It participates in pyrimidine metabolism; UMP biosynthesis via de novo pathway; UMP from orotate: step 1/2. In terms of biological role, catalyzes the transfer of a ribosyl phosphate group from 5-phosphoribose 1-diphosphate to orotate, leading to the formation of orotidine monophosphate (OMP). In Metarhizium anisopliae (Entomophthora anisopliae), this protein is Orotate phosphoribosyltransferase (URA5).